The following is a 243-amino-acid chain: Urease accessory protein UreF 2 (243 aa).

This sequence belongs to the UreF family. In terms of assembly, ureD, UreF and UreG form a complex that acts as a GTP-hydrolysis-dependent molecular chaperone, activating the urease apoprotein by helping to assemble the nickel containing metallocenter of UreC. The UreE protein probably delivers the nickel.

It is found in the cytoplasm. Functionally, required for maturation of urease via the functional incorporation of the urease nickel metallocenter. This is Urease accessory protein UreF 2 from Brucella suis (strain ATCC 23445 / NCTC 10510).